The sequence spans 43 residues: Protein PsbN (43 aa).

Residues 7 to 29 (ITIFLSGLLVSFTGYALYTAFGQ) traverse the membrane as a helical segment.

This sequence belongs to the PsbN family.

The protein resides in the plastid membrane. In terms of biological role, may play a role in photosystem I and II biogenesis. This is Protein PsbN from Cuscuta reflexa (Southern Asian dodder).